A 236-amino-acid chain; its full sequence is Leucyl/phenylalanyl-tRNA--protein transferase (236 aa).

This sequence belongs to the L/F-transferase family.

Its subcellular location is the cytoplasm. The catalysed reaction is N-terminal L-lysyl-[protein] + L-leucyl-tRNA(Leu) = N-terminal L-leucyl-L-lysyl-[protein] + tRNA(Leu) + H(+). The enzyme catalyses N-terminal L-arginyl-[protein] + L-leucyl-tRNA(Leu) = N-terminal L-leucyl-L-arginyl-[protein] + tRNA(Leu) + H(+). It catalyses the reaction L-phenylalanyl-tRNA(Phe) + an N-terminal L-alpha-aminoacyl-[protein] = an N-terminal L-phenylalanyl-L-alpha-aminoacyl-[protein] + tRNA(Phe). In terms of biological role, functions in the N-end rule pathway of protein degradation where it conjugates Leu, Phe and, less efficiently, Met from aminoacyl-tRNAs to the N-termini of proteins containing an N-terminal arginine or lysine. In Nitrosomonas europaea (strain ATCC 19718 / CIP 103999 / KCTC 2705 / NBRC 14298), this protein is Leucyl/phenylalanyl-tRNA--protein transferase.